Here is a 997-residue protein sequence, read N- to C-terminus: Protein Smaug (997 aa).

The span at 1–37 (MKYATGTDNAMTSGISGQTNNSNSASTEMQPTTSTPT) shows a compositional bias: polar residues. 2 disordered regions span residues 1-69 (MKYA…QSQP) and 329-370 (LCPA…GSSS). Composition is skewed to low complexity over residues 44 to 69 (TPTA…QSQP) and 329 to 338 (LCPASGSRSS). Phosphoserine is present on residues serine 564 and serine 575. Residues 583 to 763 (EFKPNYIKFH…KDLKFKLSKM (181 aa)) form an interaction with cup region. Residues 600-654 (GIGLWLKSLRLHKYIELFKNMTYEEMLLITEDFLQSVGVTKGASHKLALCIEKLK) enclose the SAM domain. 2 disordered regions span residues 773–892 (HVKP…MQQM) and 944–972 (GSSD…TSAE). Composition is skewed to polar residues over residues 802–822 (NGSN…NFSL) and 854–864 (HQPQYKSSSYP). The residue at position 970 (serine 970) is a Phosphoserine.

The protein belongs to the SMAUG family. In terms of assembly, interacts with oskar (osk). Binds to the 3'-UTR of nos. Interacts with cup, which in turn recruits eIF4-E, leading to an indirect interaction between smg and eIF4-E that prevents mRNA translation.

The protein localises to the cytoplasm. Functionally, translation regulator that binds to the 3'-UTR of specific mRNAs such as nanos (nos) and prevent their translation. Prevents translation of unlocalized nos in the bulk cytoplasm via the recruitment of cup. In Drosophila erecta (Fruit fly), this protein is Protein Smaug.